The primary structure comprises 107 residues: UPF0473 protein llmg_0152 (107 aa).

Belongs to the UPF0473 family.

The polypeptide is UPF0473 protein llmg_0152 (Lactococcus lactis subsp. cremoris (strain MG1363)).